A 153-amino-acid polypeptide reads, in one-letter code: Large ribosomal subunit protein uL23m (153 aa).

Residues 131–153 form a disordered region; that stretch reads MADEQQRQGSDPQRGGVPNWFSL.

It belongs to the universal ribosomal protein uL23 family. In terms of assembly, component of the mitochondrial ribosome large subunit (39S) which comprises a 16S rRNA and about 50 distinct proteins.

The protein resides in the mitochondrion. The protein is Large ribosomal subunit protein uL23m (MRPL23) of Otolemur garnettii (Small-eared galago).